We begin with the raw amino-acid sequence, 318 residues long: Ferric enterobactin-binding periplasmic protein FepB (318 aa).

The first 26 residues, 1-26 (MRLAPLYRNALLLTGLLLSGIAAVQA), serve as a signal peptide directing secretion. The Fe/B12 periplasmic-binding domain maps to 48–318 (RIVSTSVTLT…QVLDRLKALF (271 aa)).

The protein belongs to the bacterial solute-binding protein 8 family. The complex is composed of two ATP-binding proteins (FepC), two transmembrane proteins (FepD and FepG) and a solute-binding protein (FepB).

The protein resides in the periplasm. Its function is as follows. Part of the ABC transporter complex FepBDGC involved in ferric enterobactin uptake. Binds ferric enterobactin. The sequence is that of Ferric enterobactin-binding periplasmic protein FepB (fepB) from Escherichia coli O6:H1 (strain CFT073 / ATCC 700928 / UPEC).